Reading from the N-terminus, the 406-residue chain is Arginine deiminase (406 aa).

Cys396 functions as the Amidino-cysteine intermediate in the catalytic mechanism.

Belongs to the arginine deiminase family.

The protein localises to the cytoplasm. It carries out the reaction L-arginine + H2O = L-citrulline + NH4(+). Its pathway is amino-acid degradation; L-arginine degradation via ADI pathway; carbamoyl phosphate from L-arginine: step 1/2. This chain is Arginine deiminase, found in Vibrio vulnificus (strain YJ016).